A 709-amino-acid polypeptide reads, in one-letter code: Ribosomal RNA large subunit methyltransferase K/L (709 aa).

One can recognise a THUMP domain in the interval 43-154; that stretch reads LAYRITLWTR…NGVITIAMNF (112 aa).

This sequence belongs to the methyltransferase superfamily. RlmKL family.

The protein localises to the cytoplasm. The catalysed reaction is guanosine(2445) in 23S rRNA + S-adenosyl-L-methionine = N(2)-methylguanosine(2445) in 23S rRNA + S-adenosyl-L-homocysteine + H(+). It carries out the reaction guanosine(2069) in 23S rRNA + S-adenosyl-L-methionine = N(2)-methylguanosine(2069) in 23S rRNA + S-adenosyl-L-homocysteine + H(+). Functionally, specifically methylates the guanine in position 2445 (m2G2445) and the guanine in position 2069 (m7G2069) of 23S rRNA. The chain is Ribosomal RNA large subunit methyltransferase K/L from Shewanella baltica (strain OS185).